The sequence spans 193 residues: MNRSDKITLDQIKKLVPINADLINFAADVKVSAATDNPFLMAVVSQDMLESTTELPYKSIQKQVSLTVRNDNNVYQPYVLVLKSDFPQEAIVTINLQETPLVTASGCGRQTTIYPPALNGNGNGNGNGVVAPAYVSAVGGAPTDDTTQWYKDWRYWAVIALIAAVLIYLYMKSKKGSGEEQPVVIEMSRYSNA.

Residues 153 to 170 traverse the membrane as a helical segment; it reads WRYWAVIALIAAVLIYLY.

It localises to the membrane. This is an uncharacterized protein from Invertebrate iridescent virus 6 (IIV-6).